We begin with the raw amino-acid sequence, 65 residues long: Lantipeptide Flvbeta.h (65 aa).

Residues methionine 1–glycine 27 constitute a propeptide, cleaved by FlvT. 2,3-didehydrobutyrine; by FlvM2 is present on threonine 28. Residues serine 29 to cysteine 33 constitute a cross-link (lanthionine (Ser-Cys); by FlvM2). Serine 30 carries the 2,3-didehydroalanine (Ser); by FlvM2 modification. Threonine 44 is subject to 2,3-didehydrobutyrine; by FlvM2. The beta-methyllanthionine (Thr-Cys); by FlvM2 cross-link spans threonine 48–cysteine 54. Residues serine 56–cysteine 59 constitute a cross-link (lanthionine (Ser-Cys); by FlvM2). A cross-link (beta-methyllanthionine (Thr-Cys); by FlvM2) is located at residues threonine 60–cysteine 63.

Contains LL-lanthionine, DL-lanthionine, and DL-beta-methyllanthionine, when coepressed in E.coli with the flavecin synthetase FlvM2.

The protein localises to the secreted. Its function is as follows. Lanthionine-containing peptide that does probably not show antibacterial activity, since its analog [+2]Flvbeta.h does not show antibacterial activity against M.luteus. Also does not show antibiotic activity when tested with [Del2]Flvalpha.a, an analog of Flvalpha.a, which is encoded by the same operon than Flvbeta.h. The bactericidal activity of lantibiotics is based on depolarization of energized bacterial cytoplasmic membranes, initiated by the formation of aqueous transmembrane pores. The polypeptide is Lantipeptide Flvbeta.h (Ruminococcus flavefaciens).